The sequence spans 408 residues: LL-diaminopimelate aminotransferase (408 aa).

Residues Y15 and G42 each contribute to the substrate site. Pyridoxal 5'-phosphate-binding positions include Y72, 108–109, Y132, N187, Y218, and 246–248; these read SK and SFS. Substrate-binding residues include K109, Y132, and N187. The residue at position 249 (K249) is an N6-(pyridoxal phosphate)lysine. Positions 257 and 292 each coordinate pyridoxal 5'-phosphate. Positions 292 and 388 each coordinate substrate.

Belongs to the class-I pyridoxal-phosphate-dependent aminotransferase family. LL-diaminopimelate aminotransferase subfamily. Homodimer. The cofactor is pyridoxal 5'-phosphate.

It carries out the reaction (2S,6S)-2,6-diaminopimelate + 2-oxoglutarate = (S)-2,3,4,5-tetrahydrodipicolinate + L-glutamate + H2O + H(+). Its pathway is amino-acid biosynthesis; L-lysine biosynthesis via DAP pathway; LL-2,6-diaminopimelate from (S)-tetrahydrodipicolinate (aminotransferase route): step 1/1. Involved in the synthesis of meso-diaminopimelate (m-DAP or DL-DAP), required for both lysine and peptidoglycan biosynthesis. Catalyzes the direct conversion of tetrahydrodipicolinate to LL-diaminopimelate. The polypeptide is LL-diaminopimelate aminotransferase (Synechococcus sp. (strain WH7803)).